The primary structure comprises 382 residues: Na(+)/H(+) antiporter NhaA 2 (382 aa).

A run of 12 helical transmembrane segments spans residues 7–27 (AGGV…NSYL), 28–48 (SGFY…AFEI), 52–72 (LLLW…GLEV), 88–108 (VLPG…YASF), 118–138 (GWAI…SLFG), 147–167 (LFLL…IALF), 170–190 (HELS…LFVL), 206–226 (LVVW…GFVI), 254–274 (VAYF…LGGI), 285–305 (LGII…VCWL), 325–345 (GVCL…SLAF), and 356–376 (VKLG…LILT).

The protein belongs to the NhaA Na(+)/H(+) (TC 2.A.33) antiporter family.

It localises to the cell inner membrane. The catalysed reaction is Na(+)(in) + 2 H(+)(out) = Na(+)(out) + 2 H(+)(in). Functionally, na(+)/H(+) antiporter that extrudes sodium in exchange for external protons. The polypeptide is Na(+)/H(+) antiporter NhaA 2 (Saccharophagus degradans (strain 2-40 / ATCC 43961 / DSM 17024)).